Consider the following 360-residue polypeptide: Magnesium transporter NIPA2 (360 aa).

At 1-9 (MSQGRGKYD) the chain is on the extracellular side. A helical transmembrane segment spans residues 10–30 (FYIGLGLAMSSSIFIGGSFIL). Topologically, residues 31–56 (KKKGLLRLARKGSMRAGQGGHAYLKE) are cytoplasmic. Residues 57–77 (WLWWAGLLSMGAGEVANFAAY) form a helical membrane-spanning segment. A topological domain (extracellular) is located at residue alanine 78. The helical transmembrane segment at 79 to 99 (FAPATLVTPLGALSVLVSAIL) threads the bilayer. Over 100 to 107 (SSYFLNER) the chain is Cytoplasmic. Residues 108–128 (LNLHGKIGCLLSILGSTVMVI) traverse the membrane as a helical segment. The Extracellular segment spans residues 129 to 149 (HAPKEEEIETLNEMSHKLGDP). Residues 150–170 (GFVVFATLVVIVALILIFVVG) form a helical membrane-spanning segment. The Cytoplasmic portion of the chain corresponds to 171–175 (PRHGQ). Residues 176–196 (TNILVYITICSVIGAFSVSCV) form a helical membrane-spanning segment. The Extracellular portion of the chain corresponds to 197–215 (KGLGIAIKELFAGKPVLRH). A helical membrane pass occupies residues 216 to 236 (PLAWILLLSLIVCVSTQINYL). Over 237–246 (NRALDIFNTS) the chain is Cytoplasmic. The chain crosses the membrane as a helical span at residues 247–267 (IVTPIYYVFFTTSVLTCSAIL). The Extracellular portion of the chain corresponds to 268 to 278 (FKEWQDMPVDD). Residues 279 to 299 (VIGTLSGFFTIIVGIFLLHAF) form a helical membrane-spanning segment. Residues 300-360 (KDVSFSLASL…SRRNGNLTAF (61 aa)) lie on the Cytoplasmic side of the membrane.

This sequence belongs to the NIPA family. Widely expressed.

The protein resides in the cell membrane. Its subcellular location is the early endosome. It carries out the reaction Mg(2+)(in) = Mg(2+)(out). In terms of biological role, acts as a selective Mg(2+) transporter. The chain is Magnesium transporter NIPA2 (NIPA2) from Homo sapiens (Human).